The following is a 725-amino-acid chain: Lipoamidase (725 aa).

The interval methionine 1 to serine 52 is disordered. The span at glutamate 9 to valine 27 shows a compositional bias: low complexity. Polar residues predominate over residues alanine 28–methionine 40. Active-site charge relay system residues include lysine 159 and serine 235. The active-site Acyl-ester intermediate is the serine 259. Residues lysine 551–glutamine 686 are disordered. A compositionally biased stretch (basic and acidic residues) spans histidine 556 to aspartate 637. Residues serine 650 to serine 661 are compositionally biased toward low complexity. Positions alanine 662–serine 679 are enriched in polar residues. Residues proline 700–isoleucine 720 form a helical membrane-spanning segment.

The protein belongs to the amidase family. In terms of assembly, homodimer in solution.

The protein localises to the cell membrane. The enzyme catalyses N(6)-[(R)-lipoyl]-L-lysyl-[lipoyl-carrier protein] + H2O = L-lysyl-[lipoyl-carrier protein] + (R)-lipoate. With respect to regulation, lipoamidase activity is slightly inhibited by p-chloromercuribenzoate. Its function is as follows. Amidohydrolase that releases lipoic acid from the protein-bound form. Cleaves the amide bond that links lipoic acid to the lipoylated lysine epsilon-amino groups, leading to the formation of free lipoic acid plus the unmodified protein. Shows activity toward both high molecular weight protein substrates such as a lipoyl domain and intact 2-oxoacid dehydrogenases as well as small molecule substrates such as lipoyl-lysine. Also acts on small biotinylated substrates. Hydrolyzes the synthetic substrates methyl lipoate and lipoamide. The physiologically important substrates are probably lipoyl-lysine and small peptides containing lipoyl-lysine. Lpa seems likely to enable this bacterium to utilize amide-linked forms of lipoic acid that otherwise could not be assimilated. The sequence is that of Lipoamidase from Enterococcus faecalis (Streptococcus faecalis).